Here is an 89-residue protein sequence, read N- to C-terminus: Large ribosomal subunit protein bL27 (89 aa).

The interval 1-21 (MAHKKAGGSSRNGRDSAGRRL) is disordered.

It belongs to the bacterial ribosomal protein bL27 family.

The sequence is that of Large ribosomal subunit protein bL27 from Novosphingobium aromaticivorans (strain ATCC 700278 / DSM 12444 / CCUG 56034 / CIP 105152 / NBRC 16084 / F199).